Consider the following 372-residue polypeptide: MFEFEITSNCSNTKARTGIFHTPNGKVNTPKFMPVGTMATVKGISSKQLTSTGSEMILSNTFHLHLQPGEKLVKESGGIHNFMNWSKPILTDSGGYQVFSLAKLNNISDKGVEFKNPRDGSHVFLSPEKVIKIQMDLGSDVAMAFDHCPPHTANENDIEDSLQRTHSWLEKCIETHQKSNQALFGIVQGGKYPRLREYSAKFTSSFDLPGIAVGGVSVGEAVEDIHSVINYVPKFLPINKPRYLMGIGSLREISLAVANGFDIFDCVLPTRLGRHGTAFLNDERLNLRNARFKNDFSPIDKTCKCETCKSYSRAYLHHLIRNDEILGLTLISLHNIAHLLRFTNAISTAIKDNCFTNDFAPWKTSSIAHHTW.

Catalysis depends on Asp-92, which acts as the Proton acceptor. Substrate-binding positions include 92 to 96, Asp-146, Gln-188, and Gly-215; that span reads DSGGY. Positions 246–252 are RNA binding; that stretch reads GIGSLRE. Asp-265 (nucleophile) is an active-site residue. Positions 270-274 are RNA binding; important for wobble base 34 recognition; it reads TRLGR. The Zn(2+) site is built by Cys-303, Cys-305, Cys-308, and His-334.

Belongs to the queuine tRNA-ribosyltransferase family. As to quaternary structure, homodimer. Within each dimer, one monomer is responsible for RNA recognition and catalysis, while the other monomer binds to the replacement base PreQ1. Requires Zn(2+) as cofactor.

The catalysed reaction is 7-aminomethyl-7-carbaguanine + guanosine(34) in tRNA = 7-aminomethyl-7-carbaguanosine(34) in tRNA + guanine. It functions in the pathway tRNA modification; tRNA-queuosine biosynthesis. Catalyzes the base-exchange of a guanine (G) residue with the queuine precursor 7-aminomethyl-7-deazaguanine (PreQ1) at position 34 (anticodon wobble position) in tRNAs with GU(N) anticodons (tRNA-Asp, -Asn, -His and -Tyr). Catalysis occurs through a double-displacement mechanism. The nucleophile active site attacks the C1' of nucleotide 34 to detach the guanine base from the RNA, forming a covalent enzyme-RNA intermediate. The proton acceptor active site deprotonates the incoming PreQ1, allowing a nucleophilic attack on the C1' of the ribose to form the product. After dissociation, two additional enzymatic reactions on the tRNA convert PreQ1 to queuine (Q), resulting in the hypermodified nucleoside queuosine (7-(((4,5-cis-dihydroxy-2-cyclopenten-1-yl)amino)methyl)-7-deazaguanosine). This Prochlorococcus marinus (strain MIT 9215) protein is Queuine tRNA-ribosyltransferase.